The primary structure comprises 522 residues: MKMLNSVSGSFRKKAGDSRSRECRTRLERRIVGATNRWRFPQDHFCGDLLALSQMCNVLNVDLDEALKNPDRLCISKFQKLFSENIMNSGTQSGEADVILECLGFKWELHHPQIFQSGTLAKLYLTALIQNMKSSQRELDKVQKAHPSGKIKKRSPVKKIIISMRINDPAVTRVAFALALKNLYMKEVEMTVDNVLGVLASAHILQFNRLFQKCVNMMMNRLAPSTIKNFYLAGCKYEEEQLTMACEKWLAMNLVPLVGTQIHLRQIPEPLLYKVLKSPRLFTFSEFHLLKTLLMWVYLQMNCKVQMVPIHETILAFFNSFPKKCCFLEQDPGQNWMPLFLCLRLHGITSGKDLEVLKHINFFPESWLVRVTANHYHALESGGNMVHLKDLSTQAMRFGLLFRQEYTTYSERISIYGYFFEIKGIKHDPTSYSFSMQRIKHTDLECPSPVCEHSTISLRSERLVKYEIQAQTLVDGRWQEFRTNQIMQKFGFIKPGCKSHVLKIQTVGIPIYASFAFIFPAS.

The BTB domain maps to 166 to 222 (INDPAVTRVAFALALKNLYMKEVEMTVDNVLGVLASAHILQFNRLFQKCVNMMMNRL).

This chain is BTB/POZ domain-containing protein 16 (Btbd16), found in Mus musculus (Mouse).